A 281-amino-acid chain; its full sequence is Bifunctional protein FolD 1 (281 aa).

NADP(+) contacts are provided by residues 165 to 167 (GRS), serine 190, and isoleucine 231.

The protein belongs to the tetrahydrofolate dehydrogenase/cyclohydrolase family. As to quaternary structure, homodimer.

The catalysed reaction is (6R)-5,10-methylene-5,6,7,8-tetrahydrofolate + NADP(+) = (6R)-5,10-methenyltetrahydrofolate + NADPH. It carries out the reaction (6R)-5,10-methenyltetrahydrofolate + H2O = (6R)-10-formyltetrahydrofolate + H(+). The protein operates within one-carbon metabolism; tetrahydrofolate interconversion. Catalyzes the oxidation of 5,10-methylenetetrahydrofolate to 5,10-methenyltetrahydrofolate and then the hydrolysis of 5,10-methenyltetrahydrofolate to 10-formyltetrahydrofolate. This is Bifunctional protein FolD 1 from Desulfitobacterium hafniense (strain Y51).